The following is a 138-amino-acid chain: Small ribosomal subunit protein uS11c (138 aa).

The tract at residues 1-23 (MAKPIPRIGSRKNGRIGSRKSGR) is disordered. Over residues 9–23 (GSRKNGRIGSRKSGR) the composition is skewed to basic residues.

This sequence belongs to the universal ribosomal protein uS11 family. Part of the 30S ribosomal subunit.

It is found in the plastid. The protein localises to the chloroplast. The sequence is that of Small ribosomal subunit protein uS11c from Buxus microphylla (Littleleaf boxwood).